Consider the following 495-residue polypeptide: Glutamyl-tRNA(Gln) amidotransferase subunit A (495 aa).

Residues K78 and S158 each act as charge relay system in the active site. Catalysis depends on S182, which acts as the Acyl-ester intermediate.

Belongs to the amidase family. GatA subfamily. Heterotrimer of A, B and C subunits.

It carries out the reaction L-glutamyl-tRNA(Gln) + L-glutamine + ATP + H2O = L-glutaminyl-tRNA(Gln) + L-glutamate + ADP + phosphate + H(+). Allows the formation of correctly charged Gln-tRNA(Gln) through the transamidation of misacylated Glu-tRNA(Gln) in organisms which lack glutaminyl-tRNA synthetase. The reaction takes place in the presence of glutamine and ATP through an activated gamma-phospho-Glu-tRNA(Gln). In Roseobacter denitrificans (strain ATCC 33942 / OCh 114) (Erythrobacter sp. (strain OCh 114)), this protein is Glutamyl-tRNA(Gln) amidotransferase subunit A.